A 268-amino-acid chain; its full sequence is Pantothenate synthetase (268 aa).

18–25 (MGYLHEGH) serves as a coordination point for ATP. H25 serves as the catalytic Proton donor. A (R)-pantoate-binding site is contributed by Q49. Beta-alanine is bound at residue Q49. 135–138 (GQKD) contacts ATP. Q141 contacts (R)-pantoate. ATP-binding positions include V164 and 172–175 (LSSR).

Belongs to the pantothenate synthetase family. In terms of assembly, homodimer.

It is found in the cytoplasm. The enzyme catalyses (R)-pantoate + beta-alanine + ATP = (R)-pantothenate + AMP + diphosphate + H(+). Its pathway is cofactor biosynthesis; (R)-pantothenate biosynthesis; (R)-pantothenate from (R)-pantoate and beta-alanine: step 1/1. Its function is as follows. Catalyzes the condensation of pantoate with beta-alanine in an ATP-dependent reaction via a pantoyl-adenylate intermediate. The protein is Pantothenate synthetase of Dehalococcoides mccartyi (strain ATCC BAA-2266 / KCTC 15142 / 195) (Dehalococcoides ethenogenes (strain 195)).